A 728-amino-acid chain; its full sequence is Glycine--tRNA ligase (728 aa).

A mitochondrion-targeting transit peptide spans M1–L32. Positions L52–V108 constitute a WHEP-TRS domain. N6-acetyllysine is present on K193. Position 288 (E288) interacts with glycine. ATP-binding positions include R320–E322 and R331–V332. E339 contributes to the glycine binding site. Y442 is modified (phosphotyrosine). E446 to I447 is a binding site for ATP. N6-acetyllysine is present on K490. E565–S567 provides a ligand contact to glycine. Residue R572 coordinates ATP. Position 689 is a phosphoserine (S689). T725 bears the Phosphothreonine mark.

The protein belongs to the class-II aminoacyl-tRNA synthetase family. Homodimer.

Its subcellular location is the cytoplasm. It localises to the mitochondrion. The protein resides in the cell projection. The protein localises to the axon. It is found in the secreted. Its subcellular location is the extracellular exosome. The enzyme catalyses tRNA(Gly) + glycine + ATP = glycyl-tRNA(Gly) + AMP + diphosphate. It catalyses the reaction 2 ATP + H(+) = P(1),P(4)-bis(5'-adenosyl) tetraphosphate + diphosphate. In terms of biological role, catalyzes the ATP-dependent ligation of glycine to the 3'-end of its cognate tRNA, via the formation of an aminoacyl-adenylate intermediate (Gly-AMP). Also produces diadenosine tetraphosphate (Ap4A), a universal pleiotropic signaling molecule needed for cell regulation pathways, by direct condensation of 2 ATPs. Thereby, may play a special role in Ap4A homeostasis. The polypeptide is Glycine--tRNA ligase (Gars1) (Rattus norvegicus (Rat)).